The following is a 240-amino-acid chain: 1-(5-phosphoribosyl)-5-[(5-phosphoribosylamino)methylideneamino] imidazole-4-carboxamide isomerase (240 aa).

Catalysis depends on aspartate 8, which acts as the Proton acceptor. The Proton donor role is filled by aspartate 129.

Belongs to the HisA/HisF family.

It is found in the cytoplasm. It carries out the reaction 1-(5-phospho-beta-D-ribosyl)-5-[(5-phospho-beta-D-ribosylamino)methylideneamino]imidazole-4-carboxamide = 5-[(5-phospho-1-deoxy-D-ribulos-1-ylimino)methylamino]-1-(5-phospho-beta-D-ribosyl)imidazole-4-carboxamide. The protein operates within amino-acid biosynthesis; L-histidine biosynthesis; L-histidine from 5-phospho-alpha-D-ribose 1-diphosphate: step 4/9. The sequence is that of 1-(5-phosphoribosyl)-5-[(5-phosphoribosylamino)methylideneamino] imidazole-4-carboxamide isomerase from Caldanaerobacter subterraneus subsp. tengcongensis (strain DSM 15242 / JCM 11007 / NBRC 100824 / MB4) (Thermoanaerobacter tengcongensis).